The chain runs to 754 residues: MEARERGSMSSSIGNSAELEGNLTLSDRLKVFKGSTFDPDAYVTSKCQRMNEKETRHLSSYLVELKKASAEEMRKSVYANYAAFIRTSKEISALEGQLLSMRNLLSAQAALVHGLADGVHISSLCADDADDLRDEDLYDMDNKQLSNIENWVVEFFDRLEVLLAEKRVEESMAALEEGRRVAVEAHEKRTLSPTTLLSLNNAIKEKRQELADQLAEAISQPSTRGGELRSAVLSLKKLGDGSRAHTLLLRSYERRLQANIQSLRASNTSYGVAFAAALSQLVFSTIAQAASDSQAVVGEDPAYTSELVTWAVKQAESFALLLKRHTLASSAAAGSLRVTAECVQLCASHCSSLESRGLALSPVLLKHFRPGVEQALTGNLKRIEQSSAALAASDDWSLSYTPTGSRASSTTPTAPHLKLSISAQRFNSMVQEFLEDAGPLDEALQLDGIALDGVLQVFNSYVDLLINALPGSAENEENPVHRIVKVAETESQQTALLVNALLLADELIPRSASRILPQGTSQSTPRRGSSDRQNRPEQREWKKKLQRSVDRLRDSFCRQHALELIFTEEGEVRLSSEIYILMDETTEEPEWFPSPIFQELFAKLTRIAMIVSDMFVGRERFATILLMRLTETVILWISDDQSFWEEMETGDKPLGPLGLQQFYLDMEFVMIFASQGRYLSRNLHQVIKNIIARAVEAVSATGLDPYSTLPEEEWFAEVAQIAIKMLMGKGNFGGHGERDVTSPSVSSAKSYTSN.

2 disordered regions span residues 514–540 (RILPQGTSQSTPRRGSSDRQNRPEQRE) and 734–754 (GHGERDVTSPSVSSAKSYTSN). Over residues 518–527 (QGTSQSTPRR) the composition is skewed to polar residues. The segment covering 528-540 (GSSDRQNRPEQRE) has biased composition (basic and acidic residues). Residues 741–754 (TSPSVSSAKSYTSN) show a composition bias toward polar residues.

The protein belongs to the EXO84 family. In terms of assembly, the exocyst complex is composed of SEC3, SEC5, SEC6, SEC8, SEC10, EXO70A1 and EXO84.

In terms of biological role, component of the exocyst complex involved in the docking of exocytic vesicles with fusion sites on the plasma membrane during regulated or polarized secretion. Involved in polarized cell growth and organ morphogenesis. During cytokinesis, involved in cell plate initiation, cell plate maturation and formation of new primary cell wall. This is Exocyst complex component EXO84A (EXO84A) from Arabidopsis thaliana (Mouse-ear cress).